The chain runs to 408 residues: Zinc-regulated transporter 1 (408 aa).

3 helical membrane-spanning segments follow: residues 64–84, 101–121, and 141–161; these read IGAI…PLVL, LFAR…HLLA, and WAPG…VLLN. Residues threonine 234 and threonine 237 each carry the phosphothreonine modification. 5 consecutive transmembrane segments (helical) span residues 254–274, 279–299, 315–335, 351–371, and 387–407; these read FIIL…TTAV, FKTL…GLGS, WVLG…GLGV, GVLD…ELLA, and LIYL…LGKW.

This sequence belongs to the ZIP transporter (TC 2.A.5) family.

It localises to the endoplasmic reticulum membrane. In terms of biological role, high-affinity zinc transport protein. Regulates intracellular zinc levels. This is Zinc-regulated transporter 1 (zrt1) from Schizosaccharomyces pombe (strain 972 / ATCC 24843) (Fission yeast).